We begin with the raw amino-acid sequence, 449 residues long: Uridine-cytidine kinase C (449 aa).

Gly58 to Thr65 contacts ATP. Residues Asn235–Asp401 enclose the CYTH domain.

Belongs to the uridine kinase family.

It catalyses the reaction uridine + ATP = UMP + ADP + H(+). The catalysed reaction is cytidine + ATP = CMP + ADP + H(+). It participates in pyrimidine metabolism; CTP biosynthesis via salvage pathway; CTP from cytidine: step 1/3. It functions in the pathway pyrimidine metabolism; UMP biosynthesis via salvage pathway; UMP from uridine: step 1/1. Functionally, catalyzes the conversion of uridine into uridine monophosphate and cytidine into cytidine monophosphate in the pyrimidine salvage pathway. The polypeptide is Uridine-cytidine kinase C (udkC) (Dictyostelium discoideum (Social amoeba)).